We begin with the raw amino-acid sequence, 880 residues long: Translation initiation factor IF-2 (880 aa).

Disordered regions lie at residues 51–78, 93–116, and 142–293; these read KQHG…GSTG, YVKR…QAAN, and KEAD…FEKP. Residues 69–78 are compositionally biased toward polar residues; sequence STLNVKGSTG. A compositionally biased stretch (basic and acidic residues) spans 142 to 229; the sequence is KEADEKAKKA…ARKKAAEGGD (88 aa). Basic residues predominate over residues 269–279; that stretch reads GRRTRRGKKQR. Residues 380 to 549 enclose the tr-type G domain; the sequence is SRAPVVTIMG…LLQAEMLDLS (170 aa). The tract at residues 389-396 is G1; the sequence is GHVDHGKT. A GTP-binding site is contributed by 389-396; sequence GHVDHGKT. A G2 region spans residues 414-418; the sequence is GITQH. Positions 435–438 are G3; sequence DTPG. Residues 435 to 439 and 489 to 492 each bind GTP; these read DTPGH and NKID. A G4 region spans residues 489–492; it reads NKID. Residues 525–527 form a G5 region; that stretch reads SAK.

It belongs to the TRAFAC class translation factor GTPase superfamily. Classic translation factor GTPase family. IF-2 subfamily.

The protein localises to the cytoplasm. Its function is as follows. One of the essential components for the initiation of protein synthesis. Protects formylmethionyl-tRNA from spontaneous hydrolysis and promotes its binding to the 30S ribosomal subunits. Also involved in the hydrolysis of GTP during the formation of the 70S ribosomal complex. This chain is Translation initiation factor IF-2, found in Psychromonas ingrahamii (strain DSM 17664 / CCUG 51855 / 37).